The primary structure comprises 464 residues: Argininosuccinate lyase (464 aa).

It belongs to the lyase 1 family. Argininosuccinate lyase subfamily.

It is found in the cytoplasm. It catalyses the reaction 2-(N(omega)-L-arginino)succinate = fumarate + L-arginine. It functions in the pathway amino-acid biosynthesis; L-arginine biosynthesis; L-arginine from L-ornithine and carbamoyl phosphate: step 3/3. The sequence is that of Argininosuccinate lyase from Pseudomonas aeruginosa (strain ATCC 15692 / DSM 22644 / CIP 104116 / JCM 14847 / LMG 12228 / 1C / PRS 101 / PAO1).